The primary structure comprises 223 residues: N-(5'-phosphoribosyl)anthranilate isomerase (223 aa).

This sequence belongs to the TrpF family.

The enzyme catalyses N-(5-phospho-beta-D-ribosyl)anthranilate = 1-(2-carboxyphenylamino)-1-deoxy-D-ribulose 5-phosphate. The protein operates within amino-acid biosynthesis; L-tryptophan biosynthesis; L-tryptophan from chorismate: step 3/5. This is N-(5'-phosphoribosyl)anthranilate isomerase from Moorella thermoacetica (strain ATCC 39073 / JCM 9320).